The sequence spans 348 residues: Heat-inducible transcription repressor HrcA (348 aa).

This sequence belongs to the HrcA family.

In terms of biological role, negative regulator of class I heat shock genes (grpE-dnaK-dnaJ and groELS operons). Prevents heat-shock induction of these operons. The sequence is that of Heat-inducible transcription repressor HrcA from Thermomicrobium roseum (strain ATCC 27502 / DSM 5159 / P-2).